A 623-amino-acid polypeptide reads, in one-letter code: AFI1-like protein C776.06c (623 aa).

One can recognise a uDENN domain in the interval 5–204 (DYLLTAIFDP…IDNIPKPGSE (200 aa)). The region spanning 248-386 (ISNLINTFID…SDATTTMDTK (139 aa)) is the cDENN domain. The 89-residue stretch at 388 to 476 (LFNNTSPFTP…WSWDNDDEKV (89 aa)) folds into the dDENN domain.

It belongs to the AFI1/mesA family.

It is found in the cytoplasm. It localises to the cell cortex. The protein localises to the nucleus. Involved in polarity establishment. This is AFI1-like protein C776.06c from Schizosaccharomyces pombe (strain 972 / ATCC 24843) (Fission yeast).